The chain runs to 1271 residues: DNA-directed RNA polymerase subunit beta (1271 aa).

The protein belongs to the RNA polymerase beta chain family. The RNAP catalytic core consists of 2 alpha, 1 beta, 1 beta' and 1 omega subunit. When a sigma factor is associated with the core the holoenzyme is formed, which can initiate transcription.

It catalyses the reaction RNA(n) + a ribonucleoside 5'-triphosphate = RNA(n+1) + diphosphate. Its function is as follows. DNA-dependent RNA polymerase catalyzes the transcription of DNA into RNA using the four ribonucleoside triphosphates as substrates. This chain is DNA-directed RNA polymerase subunit beta, found in Acholeplasma laidlawii (strain PG-8A).